We begin with the raw amino-acid sequence, 282 residues long: NADPH-dependent 7-cyano-7-deazaguanine reductase (282 aa).

88 to 90 (IES) lines the substrate pocket. 90-91 (SK) is a binding site for NADPH. Cys190 (thioimide intermediate) is an active-site residue. The Proton donor role is filled by Asp197. Residue 229-230 (HE) coordinates substrate. 258 to 259 (RG) is an NADPH binding site.

Belongs to the GTP cyclohydrolase I family. QueF type 2 subfamily. In terms of assembly, homodimer.

The protein localises to the cytoplasm. The catalysed reaction is 7-aminomethyl-7-carbaguanine + 2 NADP(+) = 7-cyano-7-deazaguanine + 2 NADPH + 3 H(+). Its pathway is tRNA modification; tRNA-queuosine biosynthesis. In terms of biological role, catalyzes the NADPH-dependent reduction of 7-cyano-7-deazaguanine (preQ0) to 7-aminomethyl-7-deazaguanine (preQ1). The chain is NADPH-dependent 7-cyano-7-deazaguanine reductase from Pectobacterium carotovorum subsp. carotovorum (strain PC1).